The following is a 231-amino-acid chain: S-norcoclaurine synthase 1 (231 aa).

107–109 contributes to the dopamine binding site; sequence YKE. Catalysis depends on Lys-121, which acts as the Proton donor. Asp-140 is a (4-hydroxyphenyl)acetaldehyde binding site. Residues 210-230 traverse the membrane as a helical segment; the sequence is LLLCLIICLVIAGGMFVAGVP.

It belongs to the BetVI family. In terms of tissue distribution, detected in roots, stems, leaves, flower buds and germinating seeds.

The protein localises to the membrane. The enzyme catalyses (4-hydroxyphenyl)acetaldehyde + dopamine = (S)-norcoclaurine + H2O. It participates in alkaloid biosynthesis; (S)-reticuline biosynthesis. Its activity is regulated as follows. Activity doubles within 5 hours of elicitor treatment and continues to increase for at least 80 hours. In terms of biological role, involved in the biosynthesis of (S)-coclaurine, the common precursor of all benzylisoquinoline alkaloids such as morphine, sanguinarine, codeine or papaverine. Condenses dopamine and 4-hydroxyphenylacetaldehyde. The protein is S-norcoclaurine synthase 1 of Papaver somniferum (Opium poppy).